Here is a 551-residue protein sequence, read N- to C-terminus: Probable aldehyde dehydrogenase (551 aa).

Position 278-283 (278-283) interacts with NAD(+); that stretch reads GSSRVA. Residue Glu297 is the Proton acceptor of the active site. Cys332 serves as the catalytic Nucleophile.

This sequence belongs to the aldehyde dehydrogenase family. In uninfected plants, highest levels found in stems. In plants infected with the flax rust, highest levels in leaves. Higher levels of expression in infected leaves than uninfected stems.

The enzyme catalyses an aldehyde + NAD(+) + H2O = a carboxylate + NADH + 2 H(+). Could be involved in facilitating the biotrophic relationship between the plant and the rust fungus. The chain is Probable aldehyde dehydrogenase (FIS1) from Linum usitatissimum (Flax).